The primary structure comprises 711 residues: MMFRDQVGVLAGWFKGWNECEQTVALLSLLKRVSQTQARFLQLCLEHSLADCAELHVLEGEANSPGIINQWQQESKDKVISLLLTHLPLLKPGNLDAKAEYMKLLPKILAHSIEHNQHIEESRQLLSYALIHPATSLEDRSALAMWLNHLEDRTSTSFGSQNRGRSDSVDYGQTHYYHQRQNSDDKLNGWQNSRDSGICISASNWQDKSLGCENGHVPLYSSSSVPATINTIGTGASTILSGQAHHSPLKRSVSLTPPMNVPNQPLGHGWMSHEDLRARGPQCLPSDHAPLSPQSSVASSGSGGSEHLEDQTTARNTFQEEGSGMKDVPAWLKSLRLHKYAALFSQMTYEEMMALTECQLEAQNVTKGARHKIVISIQKLKERQNLLKSLERDIIEGGSLRTPLQELHQMILTPIKAYSSPSTTPEVRCREPSLMESPSPDCKDSAAAVTSATASASAGASGGLQPPQLSSCDGELAVAPLPEGDLPGQFTRVMGKVCTQLLVSRPDEENISSYLQLLDKCLVHEAFTETQKKRLLSWKQQVQKLFRSFPRKTLLDISGYRQQRNRGFGQSNSLPTASSVGSGMGRRNPRQYQIASRNVPSARLGLLGTSGFVSSNQRHTAANPTIMKQGRQNLWFANPGGSNSMPSRTHSSVQKTRSLPVHTSPQNMLMFQQPEFQLPVTEPDINNRLESLCLSMTEHALGDGVDRTSTI.

The residue at position 168 (Ser168) is a Phosphoserine. The segment at 278–323 (ARGPQCLPSDHAPLSPQSSVASSGSGGSEHLEDQTTARNTFQEEGS) is disordered. Residues 323-396 (SGMKDVPAWL…LKSLERDIIE (74 aa)) form the SAM domain. Residue Ser420 is modified to Phosphoserine. Disordered stretches follow at residues 422 to 448 (STTPEVRCREPSLMESPSPDCKDSAAA) and 565 to 588 (NRGFGQSNSLPTASSVGSGMGRRN). Thr424 bears the Phosphothreonine mark. Omega-N-methylarginine is present on Arg566. Positions 568 to 581 (FGQSNSLPTASSVG) are enriched in polar residues. Ser573 carries the phosphoserine modification.

The protein belongs to the SMAUG family. As to expression, expressed in brain (at protein level).

The protein resides in the cytoplasm. It is found in the cell projection. Its subcellular location is the dendrite. It localises to the synapse. The protein localises to the synaptosome. Acts as a translational repressor of SRE-containing messengers. The polypeptide is Protein Smaug homolog 1 (Samd4a) (Mus musculus (Mouse)).